A 604-amino-acid polypeptide reads, in one-letter code: Proline--tRNA ligase (604 aa).

Belongs to the class-II aminoacyl-tRNA synthetase family. ProS type 1 subfamily. In terms of assembly, homodimer.

Its subcellular location is the cytoplasm. It carries out the reaction tRNA(Pro) + L-proline + ATP = L-prolyl-tRNA(Pro) + AMP + diphosphate. Its function is as follows. Catalyzes the attachment of proline to tRNA(Pro) in a two-step reaction: proline is first activated by ATP to form Pro-AMP and then transferred to the acceptor end of tRNA(Pro). As ProRS can inadvertently accommodate and process non-cognate amino acids such as alanine and cysteine, to avoid such errors it has two additional distinct editing activities against alanine. One activity is designated as 'pretransfer' editing and involves the tRNA(Pro)-independent hydrolysis of activated Ala-AMP. The other activity is designated 'posttransfer' editing and involves deacylation of mischarged Ala-tRNA(Pro). The misacylated Cys-tRNA(Pro) is not edited by ProRS. This chain is Proline--tRNA ligase, found in Nostoc punctiforme (strain ATCC 29133 / PCC 73102).